The primary structure comprises 126 residues: uncharacterized protein (126 aa).

A disordered region spans residues 1–46 (MREEEAAAVVTVPQAGRDGEQPGPPAGLGCAAVRGEPGGGGPQESR).

The protein localises to the cytoplasm. It is found in the cytoskeleton. The protein resides in the cilium basal body. This is an uncharacterized protein from Bos taurus (Bovine).